We begin with the raw amino-acid sequence, 430 residues long: Trigger factor (430 aa).

One can recognise a PPIase FKBP-type domain in the interval G163–P248.

It belongs to the FKBP-type PPIase family. Tig subfamily.

The protein localises to the cytoplasm. It catalyses the reaction [protein]-peptidylproline (omega=180) = [protein]-peptidylproline (omega=0). Its function is as follows. Involved in protein export. Acts as a chaperone by maintaining the newly synthesized protein in an open conformation. Functions as a peptidyl-prolyl cis-trans isomerase. This Lawsonia intracellularis (strain PHE/MN1-00) protein is Trigger factor.